The following is a 528-amino-acid chain: Capsule biosynthesis protein CapD proenzyme (528 aa).

The N-terminal stretch at 1-26 is a signal peptide; that stretch reads MNSFKWGKKIILFCLIVSLMGGIGVS. Thr-352 (nucleophile) is an active-site residue. Poly-gamma-D-glutamate-binding positions include Thr-352, 429 to 432, and Arg-520; that span reads GGNR.

This sequence belongs to the gamma-glutamyltransferase family. In terms of assembly, this enzyme consists of two polypeptide chains, which are synthesized in precursor form from a single polypeptide. Post-translationally, cleaved by autocatalysis into a large and a small subunit.

Its pathway is capsule biogenesis; capsule polysaccharide biosynthesis. Functionally, transpeptidase that cleaves the poly-gamma-D-glutamate capsule and catalyzes the formation of an amide bond with the side-chain amino group of meso-diaminopimelic acid (m-DAP) in the peptidoglycan scaffold. Degradation of the high-molecular weight capsule (H-capsule) to the lower-molecular weight capsule (L-capsule), which is released from the bacterial cell surface. The production of L-capsule is essential to mediate escape from host defenses. This chain is Capsule biosynthesis protein CapD proenzyme (capD), found in Bacillus anthracis.